The following is a 115-amino-acid chain: NTF2-related export protein 1 (115 aa).

Residues 7–115 (YAQEFVQRYY…LVLRSSTNFL (109 aa)) form the NTF2 domain.

It is found in the nucleus. Functionally, stimulator of protein export for NES-containing proteins. Also plays a role in mRNA nuclear export. The sequence is that of NTF2-related export protein 1 (nxt1) from Schizosaccharomyces pombe (strain 972 / ATCC 24843) (Fission yeast).